Reading from the N-terminus, the 288-residue chain is Ribosomal RNA small subunit methyltransferase A (288 aa).

S-adenosyl-L-methionine is bound by residues N28, L30, G55, E76, D101, and N130.

It belongs to the class I-like SAM-binding methyltransferase superfamily. rRNA adenine N(6)-methyltransferase family. RsmA subfamily.

Its subcellular location is the cytoplasm. It carries out the reaction adenosine(1518)/adenosine(1519) in 16S rRNA + 4 S-adenosyl-L-methionine = N(6)-dimethyladenosine(1518)/N(6)-dimethyladenosine(1519) in 16S rRNA + 4 S-adenosyl-L-homocysteine + 4 H(+). Functionally, specifically dimethylates two adjacent adenosines (A1518 and A1519) in the loop of a conserved hairpin near the 3'-end of 16S rRNA in the 30S particle. May play a critical role in biogenesis of 30S subunits. This chain is Ribosomal RNA small subunit methyltransferase A, found in Moorella thermoacetica (strain ATCC 39073 / JCM 9320).